Here is a 179-residue protein sequence, read N- to C-terminus: Large ribosomal subunit protein uL6 (179 aa).

Belongs to the universal ribosomal protein uL6 family. Part of the 50S ribosomal subunit.

In terms of biological role, this protein binds to the 23S rRNA, and is important in its secondary structure. It is located near the subunit interface in the base of the L7/L12 stalk, and near the tRNA binding site of the peptidyltransferase center. The sequence is that of Large ribosomal subunit protein uL6 from Parasynechococcus marenigrum (strain WH8102).